The primary structure comprises 336 residues: Zinc transporter ZIP11 (336 aa).

The next 7 membrane-spanning stretches (helical) occupy residues 12–32 (LLGT…VFIF), 44–64 (LGFA…APAI), 75–95 (SFAF…VYLA), 188–208 (IMLL…AVGV), 258–278 (WYGQ…TIAI), 280–300 (LAEP…VYVV), and 316–336 (LASW…VGLG).

Belongs to the ZIP transporter (TC 2.A.5) family.

It localises to the cell membrane. The protein resides in the nucleus. It is found in the cytoplasm. Its subcellular location is the golgi apparatus. Functionally, functions as a cellular zinc transporter. The protein is Zinc transporter ZIP11 (slc39a11) of Xenopus tropicalis (Western clawed frog).